The chain runs to 376 residues: Heat-inducible transcription repressor HrcA (376 aa).

This sequence belongs to the HrcA family.

Negative regulator of class I heat shock genes (grpE-dnaK-dnaJ and groELS operons). Prevents heat-shock induction of these operons. The protein is Heat-inducible transcription repressor HrcA of Chloroflexus aggregans (strain MD-66 / DSM 9485).